Here is a 515-residue protein sequence, read N- to C-terminus: Maturase K (515 aa).

Belongs to the intron maturase 2 family. MatK subfamily.

It is found in the plastid. The protein localises to the chloroplast. Its function is as follows. Usually encoded in the trnK tRNA gene intron. Probably assists in splicing its own and other chloroplast group II introns. In Cedrus atlantica (Atlas cedar), this protein is Maturase K.